A 563-amino-acid polypeptide reads, in one-letter code: Nicalin (563 aa).

Residues Met-1–Gly-29 form the signal peptide. Residues Ser-30 to Pro-522 are Lumenal-facing. Asn-232 carries N-linked (GlcNAc...) asparagine glycosylation. A helical transmembrane segment spans residues Ala-523–Ile-543. Over Ala-544 to Phe-563 the chain is Cytoplasmic.

The protein belongs to the nicastrin family. May interact with the levamisole-sensitive nicotinic acetylcholine receptor (L-AChR). May interact with nra-4 in the ER. In terms of tissue distribution, expressed in body wall, pharyngeal, and vulval muscles, excretory canal cell, head and motor neurons, and vulval epithelium.

The protein localises to the endoplasmic reticulum membrane. Its function is as follows. Involved in the recognition and selection of protein complexes to exit the endoplasmic reticulum (ER). In muscles, regulates levamisole-sensitive nicotinic acetylcholine receptor (L-AChR) subunit composition, possibly by allowing only specific L-AChR subunit combinations to exit the ER. Specifically, may promote the inclusion of alpha subunits unc-38 and unc-29 into L-AChR. Regulates L-AChR sensitivity to agonists such as nicotine and levamisole at neuro-muscular junctions. In touch neurons, may prevent ER exit of incorrectly folded mec-4-mec-10 ion channel. This Caenorhabditis elegans protein is Nicalin.